Here is a 646-residue protein sequence, read N- to C-terminus: Amyloid beta A4 precursor protein-binding family B member 1-interacting protein (646 aa).

Positions 82 to 141 (FATERDTSKGSVPVAPAPSKPQSNFSLPASFDSSKPATSSNSIAAPPPPPAFKPSKEEEE) are disordered. A compositionally biased stretch (polar residues) spans 101 to 116 (KPQSNFSLPASFDSSK). In terms of domain architecture, Ras-associating spans 162 to 248 (KKLVVKVEIT…NKVLFQEKKH (87 aa)). The region spanning 292 to 401 (VPDLEGVLYL…WVTGIRVAKY (110 aa)) is the PH domain. A disordered region spans residues 420–646 (ASWANRTIQA…NAMQKKRTQP (227 aa)). A compositionally biased stretch (low complexity) spans 429–445 (ASSTASTPSPTPKAKAA). Pro residues-rich tracts occupy residues 465–500 (LPPPPPSMDFLPPPPPDPMFPPPPPAPPAPPAPPVP), 509–536 (FPPPPKFPQSSFPPPPMDDLPPPPPPPE), 560–577 (LPPPPPDPVASLPPPPPA), and 584–598 (APPPPPPPPPPPAPA).

This sequence belongs to the MRL family.

It is found in the cell membrane. The protein resides in the cytoplasm. The protein localises to the cytoskeleton. Its function is as follows. Appears to function in the signal transduction from Ras activation to actin cytoskeletal remodeling. The chain is Amyloid beta A4 precursor protein-binding family B member 1-interacting protein (apbb1ip) from Danio rerio (Zebrafish).